We begin with the raw amino-acid sequence, 86 residues long: Putative pro-MCH-like protein 1 (86 aa).

The interval 31–49 (GSVAFPAENGVQDTESTQE) is NGE-like. The interval 38–62 (ENGVQDTESTQEKRETGDEENSAKF) is disordered. An NEI-like region spans residues 52 to 64 (ETGDEENSAKFPV). The melanin-concentrating hormone-like stretch occupies residues 68-86 (DFDTLSCMLGRVYQSCWQV).

Belongs to the melanin-concentrating hormone family. In terms of tissue distribution, expressed in testis and brain.

The polypeptide is Putative pro-MCH-like protein 1 (PMCHL1) (Homo sapiens (Human)).